We begin with the raw amino-acid sequence, 89 residues long: Small ribosomal subunit protein uS15 (89 aa).

The protein belongs to the universal ribosomal protein uS15 family. In terms of assembly, part of the 30S ribosomal subunit. Forms a bridge to the 50S subunit in the 70S ribosome, contacting the 23S rRNA.

Its function is as follows. One of the primary rRNA binding proteins, it binds directly to 16S rRNA where it helps nucleate assembly of the platform of the 30S subunit by binding and bridging several RNA helices of the 16S rRNA. Functionally, forms an intersubunit bridge (bridge B4) with the 23S rRNA of the 50S subunit in the ribosome. The protein is Small ribosomal subunit protein uS15 of Beutenbergia cavernae (strain ATCC BAA-8 / DSM 12333 / CCUG 43141 / JCM 11478 / NBRC 16432 / NCIMB 13614 / HKI 0122).